Consider the following 1167-residue polypeptide: Phenyloxazoline synthase MbtB (1167 aa).

In terms of domain architecture, Carrier 1 spans 2 to 78 (EAVVTSSQTV…AWTRLVGERT (77 aa)). S39 is modified (O-(pantetheine 4'-phosphoryl)serine). The disordered stretch occupies residues 78–100 (TAESPGAATQSGDTAASAGDPDA). Residues 98 to 390 (PDAPFPLAPI…SSLMLDVDFT (293 aa)) are condensation/cyclization. An adenylation region spans residues 575–967 (TYAELRERVL…RIAGVEAAVA (393 aa)). One can recognise a Carrier 2 domain in the interval 1054–1130 (VPSTALERAL…ALARRLVDHE (77 aa)). O-(pantetheine 4'-phosphoryl)serine is present on S1089.

The protein belongs to the ATP-dependent AMP-binding enzyme family. MbtB subfamily. The cofactor is pantetheine 4'-phosphate. 4'-phosphopantetheine is transferred from CoA to a specific serine in each of the two carrier protein domains, leading to their activation from apo to holo forms.

It participates in siderophore biosynthesis; mycobactin biosynthesis. Its function is as follows. Involved in the initial steps of the mycobactin biosynthetic pathway. Putatively couples activated salicylic acid with serine or threonine and cyclizes this precursor to the hydroxyphenyloxazoline ring system present in this class of siderophores. This Mycobacterium sp. (strain MCS) protein is Phenyloxazoline synthase MbtB (mbtB).